Here is a 421-residue protein sequence, read N- to C-terminus: ATP-dependent RNA helicase RhlB (421 aa).

Positions 9 to 37 (THFADLPINEQVVKALSAANFSHCTPIQA) match the Q motif motif. Positions 40–216 (LPPLLEGNDI…YEHMDNPTHV (177 aa)) constitute a Helicase ATP-binding domain. Position 53-60 (53-60 (AQTGTGKT)) interacts with ATP. Positions 162–165 (DEAD) match the DEAD box motif. The Helicase C-terminal domain maps to 240 to 387 (KMALLLSLME…VTEYQADALL (148 aa)). A disordered region spans residues 389–421 (DVTPPKPRHKKRMQNGRNPQKRQSSGSRNRRKP). A compositionally biased stretch (polar residues) spans 403–415 (NGRNPQKRQSSGS).

It belongs to the DEAD box helicase family. RhlB subfamily. Component of the RNA degradosome, which is a multiprotein complex involved in RNA processing and mRNA degradation.

It is found in the cytoplasm. The enzyme catalyses ATP + H2O = ADP + phosphate + H(+). DEAD-box RNA helicase involved in RNA degradation. Has RNA-dependent ATPase activity and unwinds double-stranded RNA. The sequence is that of ATP-dependent RNA helicase RhlB from Pseudoalteromonas atlantica (strain T6c / ATCC BAA-1087).